Reading from the N-terminus, the 395-residue chain is Neuromedin-U receptor 2 (395 aa).

The Extracellular segment spans residues 1–41 (MGKLENASWIHDPLMKYLNSTEEYLAHLCGPKRSDLSLPVS). Residues asparagine 6 and asparagine 19 are each glycosylated (N-linked (GlcNAc...) asparagine). Residues 42–62 (VAYALIFLVGVMGNLLVCMVI) traverse the membrane as a helical segment. The Cytoplasmic portion of the chain corresponds to 63–74 (VRHQTLKTPTNY). A helical transmembrane segment spans residues 75-95 (YLFSLAVSDLLVLLLGMPLEI). Residues 96–115 (YEMWHNYPFLFGPVGCYFKT) are Extracellular-facing. Cysteines 111 and 196 form a disulfide. The helical transmembrane segment at 116-138 (ALFETVCFASILSVTTVSVERYV) threads the bilayer. Residues 139 to 157 (AIVHPFRAKLESTRRRALR) are Cytoplasmic-facing. A helical transmembrane segment spans residues 158–178 (ILSLVWSFSVVFSLPNTSIHG). Over 179–212 (IKFQHFPNGSSVPGSATCTVTKPMWVYNLIIQAT) the chain is Extracellular. N-linked (GlcNAc...) asparagine glycosylation is present at asparagine 186. The chain crosses the membrane as a helical span at residues 213-233 (SFLFYILPMTLISVLYYLMGL). Residues 234-257 (RLKRDESLEANKVAVNIHRPSRKS) are Cytoplasmic-facing. Residues 258-278 (VTKMLFVLVLVFAICWTPFHV) form a helical membrane-spanning segment. At 279–293 (DRLFFSFVEEWTESL) the chain is on the extracellular side. Residues 294–314 (AAVFNLIHVVSGVFFYLSSAV) traverse the membrane as a helical segment. Residues 315–395 (NPIIYNLLSR…TTAPCAGEVP (81 aa)) lie on the Cytoplasmic side of the membrane. A disordered region spans residues 374–395 (FPGQSSIHNTNLTTAPCAGEVP). Over residues 375-387 (PGQSSIHNTNLTT) the composition is skewed to polar residues.

Belongs to the G-protein coupled receptor 1 family. As to expression, the highest level is detected in the uterus. In the central nervous system, high expression levels were found in the hypothalamus and moderate levels in both the medulla oblongata and spinal cord. Expressed in the hypothalamic paraventricular nucleus (PVN) and suprachiasmatic nuclei (SCN) of the hypothalamus. Expression is low in the gastrointestinal tract. In other peripheral tissues, moderate expression was observed in the lung and ovary.

It is found in the cell membrane. Its function is as follows. Receptor for the neuromedin-U and neuromedin-S neuropeptides. This chain is Neuromedin-U receptor 2 (Nmur2), found in Rattus norvegicus (Rat).